Reading from the N-terminus, the 334-residue chain is Transcription initiation factor IIB (334 aa).

A TFIIB-type zinc finger spans residues 34-65 (EELVCPMCDSKNIIKDYEKAEIVCEDCGCVLQ). Cys38, Cys41, Cys57, and Cys60 together coordinate Zn(2+). 2 consecutive repeat copies span residues 151–234 (SELD…SREL) and 245–326 (DYVP…ELTE).

It belongs to the TFIIB family.

Functionally, stabilizes TBP binding to an archaeal box-A promoter. Also responsible for recruiting RNA polymerase II to the pre-initiation complex (DNA-TBP-TFIIB). The chain is Transcription initiation factor IIB from Methanococcus aeolicus (strain ATCC BAA-1280 / DSM 17508 / OCM 812 / Nankai-3).